Consider the following 132-residue polypeptide: Antileukoproteinase (132 aa).

The first 24 residues, 1 to 24 (MKFSGLFPFLLLALGTLALWAVEG), serve as a signal peptide directing secretion. Residues 28 to 76 (EALKAGACPPRKSAQCFGNEKPRCSSDWQCPHKKKCCLDTCGTECLDPV) enclose the WAP 1 domain. 4 disulfide bridges follow: C35–C64, C43–C68, C51–C63, and C57–C72. N77 is a glycosylation site (N-linked (GlcNAc...) asparagine). A WAP 2 domain is found at 82–130 (VKKKPGTCPVIHGQCLMLKPLNHCETDDQCIGALKCCKAMCGKVCLSPV). 4 disulfide bridges follow: C89/C118, C96/C122, C105/C117, and C111/C126.

In terms of assembly, interacts with GRN; interaction protects progranulin from proteolysis. Detected in bronchoalveolar fluid (at protein level). Detected in large and small intestine, trachea, skin, lung and tongue.

It is found in the secreted. Functionally, acid-stable proteinase inhibitor with strong affinities for trypsin, chymotrypsin, elastase, and cathepsin G. Modulates the inflammatory and immune responses after bacterial infection, and after infection by the intracellular parasite L.major. Down-regulates responses to bacterial lipopolysaccharide (LPS). Plays a role in regulating the activation of NF-kappa-B and inflammatory responses. Has antimicrobial activity against mycobacteria, but not against salmonella. Contributes to normal resistance against infection by M.tuberculosis. Required for normal resistance to infection by L.major. Required for normal wound healing, probably by preventing tissue damage by limiting protease activity. Together with ELANE, required for normal differentiation and proliferation of bone marrow myeloid cells. The sequence is that of Antileukoproteinase (SLPI) from Ovis aries (Sheep).